Here is a 344-residue protein sequence, read N- to C-terminus: L-threonine 3-dehydrogenase (344 aa).

A Zn(2+)-binding site is contributed by cysteine 42. Active-site charge relay system residues include threonine 44 and histidine 47. Residues histidine 67, glutamate 68, cysteine 97, cysteine 100, cysteine 103, and cysteine 111 each contribute to the Zn(2+) site. NAD(+) contacts are provided by residues isoleucine 179, aspartate 199, arginine 204, 266–268 (LGI), and 290–291 (IY).

The protein belongs to the zinc-containing alcohol dehydrogenase family. In terms of assembly, homotetramer. The cofactor is Zn(2+).

The protein resides in the cytoplasm. The catalysed reaction is L-threonine + NAD(+) = (2S)-2-amino-3-oxobutanoate + NADH + H(+). It participates in amino-acid degradation; L-threonine degradation via oxydo-reductase pathway; glycine from L-threonine: step 1/2. Its function is as follows. Catalyzes the NAD(+)-dependent oxidation of L-threonine to 2-amino-3-ketobutyrate. The protein is L-threonine 3-dehydrogenase of Mesorhizobium japonicum (strain LMG 29417 / CECT 9101 / MAFF 303099) (Mesorhizobium loti (strain MAFF 303099)).